The following is a 214-amino-acid chain: Probable nicotinate-nucleotide adenylyltransferase (214 aa).

It belongs to the NadD family.

It catalyses the reaction nicotinate beta-D-ribonucleotide + ATP + H(+) = deamido-NAD(+) + diphosphate. It participates in cofactor biosynthesis; NAD(+) biosynthesis; deamido-NAD(+) from nicotinate D-ribonucleotide: step 1/1. Its function is as follows. Catalyzes the reversible adenylation of nicotinate mononucleotide (NaMN) to nicotinic acid adenine dinucleotide (NaAD). This Mycobacterium bovis (strain ATCC BAA-935 / AF2122/97) protein is Probable nicotinate-nucleotide adenylyltransferase.